Here is a 138-residue protein sequence, read N- to C-terminus: Large ribosomal subunit protein uL16 (138 aa).

A compositionally biased stretch (basic residues) spans 1 to 13 (MLQPARRKYRKEQ). The interval 1–22 (MLQPARRKYRKEQKGRNTGVAT) is disordered.

It belongs to the universal ribosomal protein uL16 family. In terms of assembly, part of the 50S ribosomal subunit.

In terms of biological role, binds 23S rRNA and is also seen to make contacts with the A and possibly P site tRNAs. The sequence is that of Large ribosomal subunit protein uL16 from Polaromonas sp. (strain JS666 / ATCC BAA-500).